Reading from the N-terminus, the 673-residue chain is DNA ligase (673 aa).

NAD(+)-binding positions include 32–36, 81–82, and Glu113; these read DAEYD and SL. Catalysis depends on Lys115, which acts as the N6-AMP-lysine intermediate. Residues Arg136, Glu173, Lys290, and Lys314 each coordinate NAD(+). Zn(2+) contacts are provided by Cys408, Cys411, Cys426, and Cys432. Positions 595 to 673 constitute a BRCT domain; that stretch reads EIDSPFAGKT…EAEMIRLLGA (79 aa).

It belongs to the NAD-dependent DNA ligase family. LigA subfamily. The cofactor is Mg(2+). Mn(2+) is required as a cofactor.

The enzyme catalyses NAD(+) + (deoxyribonucleotide)n-3'-hydroxyl + 5'-phospho-(deoxyribonucleotide)m = (deoxyribonucleotide)n+m + AMP + beta-nicotinamide D-nucleotide.. Functionally, DNA ligase that catalyzes the formation of phosphodiester linkages between 5'-phosphoryl and 3'-hydroxyl groups in double-stranded DNA using NAD as a coenzyme and as the energy source for the reaction. It is essential for DNA replication and repair of damaged DNA. The sequence is that of DNA ligase from Serratia proteamaculans (strain 568).